Consider the following 295-residue polypeptide: Protoheme IX farnesyltransferase (295 aa).

The next 9 helical transmembrane spans lie at 8–28, 35–55, 74–94, 106–125, 132–152, 162–182, 208–228, 233–253, and 264–284; these read VTKP…FLLA, YPLF…GCVF, VLVK…LLGI, PLAM…VYSL, VYGT…GYCA, LILL…IAIF, ITLY…GGYA, LVVA…GYKA, and FVFS…DFMV.

Belongs to the UbiA prenyltransferase family. Protoheme IX farnesyltransferase subfamily.

It localises to the cell inner membrane. It carries out the reaction heme b + (2E,6E)-farnesyl diphosphate + H2O = Fe(II)-heme o + diphosphate. It participates in porphyrin-containing compound metabolism; heme O biosynthesis; heme O from protoheme: step 1/1. Converts heme B (protoheme IX) to heme O by substitution of the vinyl group on carbon 2 of heme B porphyrin ring with a hydroxyethyl farnesyl side group. The sequence is that of Protoheme IX farnesyltransferase from Cronobacter sakazakii (strain ATCC BAA-894) (Enterobacter sakazakii).